The chain runs to 438 residues: Cobyrinate a,c-diamide synthase (438 aa).

The GATase cobBQ-type domain occupies 242–426; it reads TIAIARDAAF…FHAYFSSCPA (185 aa). C325 functions as the Nucleophile in the catalytic mechanism.

Belongs to the CobB/CbiA family. Mg(2+) is required as a cofactor.

The enzyme catalyses cob(II)yrinate + 2 L-glutamine + 2 ATP + 2 H2O = cob(II)yrinate a,c diamide + 2 L-glutamate + 2 ADP + 2 phosphate + 2 H(+). It participates in cofactor biosynthesis; adenosylcobalamin biosynthesis; cob(II)yrinate a,c-diamide from sirohydrochlorin (anaerobic route): step 10/10. Functionally, catalyzes the ATP-dependent amidation of the two carboxylate groups at positions a and c of cobyrinate, using either L-glutamine or ammonia as the nitrogen source. The sequence is that of Cobyrinate a,c-diamide synthase from Herminiimonas arsenicoxydans.